Consider the following 114-residue polypeptide: Large ribosomal subunit protein bL19 (114 aa).

This sequence belongs to the bacterial ribosomal protein bL19 family.

This protein is located at the 30S-50S ribosomal subunit interface and may play a role in the structure and function of the aminoacyl-tRNA binding site. The sequence is that of Large ribosomal subunit protein bL19 from Bacillus mycoides (strain KBAB4) (Bacillus weihenstephanensis).